The following is a 436-amino-acid chain: Antilisterial bacteriocin subtilosin biosynthesis protein AlbD (436 aa).

10 consecutive transmembrane segments (helical) span residues 27-47, 51-71, 112-132, 134-154, 166-186, 187-207, 240-260, 270-290, 315-335, and 395-415; these read IAAG…QAGI, VLGK…MVFL, TLFF…SGAQ, LFWL…GVML, FLLH…MPAV, TIPL…PVFL, AMLL…FQMM, IYIV…LYSI, FYSG…GFIS, and ATLA…LIIV.

The protein resides in the cell membrane. In terms of biological role, involved in the production of the bacteriocin subtilosin. Required for immunity to subtilosin. This Bacillus subtilis protein is Antilisterial bacteriocin subtilosin biosynthesis protein AlbD (albD).